A 296-amino-acid chain; its full sequence is Glycine--tRNA ligase alpha subunit (296 aa).

This sequence belongs to the class-II aminoacyl-tRNA synthetase family. In terms of assembly, tetramer of two alpha and two beta subunits.

It localises to the cytoplasm. It carries out the reaction tRNA(Gly) + glycine + ATP = glycyl-tRNA(Gly) + AMP + diphosphate. The chain is Glycine--tRNA ligase alpha subunit from Polynucleobacter necessarius subsp. necessarius (strain STIR1).